The sequence spans 756 residues: Receptor-like protein 3 (756 aa).

An N-terminal signal peptide occupies residues Met1–Ala50. Residues Leu51–Ile88 are N-cap. Over Leu51–Lys725 the chain is Extracellular. A glycan (N-linked (GlcNAc...) asparagine) is linked at Asn66. LRR repeat units follow at residues Asp95–Leu119, His120–Ala143, Asp145–Asn169, Cys174–Gln199, Thr201–Ser225, Ser226–Cys250, Lys252–Leu274, Ser275–Leu298, Thr299–Leu322, Ser323–Cys346, Asn348–Arg370, Phe371–Cys395, Ser397–Leu419, Glu420–Gln443, Cys445–Ser471, Phe474–Leu498, Lys499–Thr521, and Phe522–Leu546. N-linked (GlcNAc...) asparagine glycosylation is found at Asn126 and Asn169. Residue Asn208 is glycosylated (N-linked (GlcNAc...) asparagine). 2 N-linked (GlcNAc...) asparagine glycosylation sites follow: Asn262 and Asn273. Asn334 and Asn345 each carry an N-linked (GlcNAc...) asparagine glycan. An N-linked (GlcNAc...) asparagine glycan is attached at Asn381. Asn434, Asn447, and Asn459 each carry an N-linked (GlcNAc...) asparagine glycan. Residues Ala548–Val569 form an LRR 19; degenerate repeat. 4 LRR repeats span residues Ser570 to Arg593, Leu608 to Lys631, Leu632 to Leu656, and Tyr658 to Thr681. Asn573 carries an N-linked (GlcNAc...) asparagine glycan. N-linked (GlcNAc...) asparagine glycosylation is present at Asn666. The segment at Leu699–Lys725 is C-cap/acidic domain. A helical membrane pass occupies residues Phe726–Phe746. The Cytoplasmic portion of the chain corresponds to Phe747–Lys756.

It belongs to the RLP family. As to expression, expressed at very low levels in the shoot apex.

It is found in the cell membrane. Involved in the perception of CLV3 and CLV3-like peptides, that act as extracellular signals regulating meristems maintenance. Contributes, with WAKL22/RFO1, to resistance to F.oxysporum (f.) matthioli in cv. Columbia relative to cv. Ty-0. This Arabidopsis thaliana (Mouse-ear cress) protein is Receptor-like protein 3.